The chain runs to 512 residues: Centrosomal protein CCDC61 (512 aa).

M1 carries the N-acetylmethionine modification. The segment at 1 to 143 (MDQPAGLQVD…PLPLPYQGKP (143 aa)) is head domain. Coiled coils occupy residues 178–205 (IWHL…SREE) and 248–275 (CRRL…LTSE). Residues 276–477 (LALYKRGRRT…KSLANSGGWV (202 aa)) form a disordered region. A Phosphothreonine modification is found at T285. Residues 293–306 (TREDRASSSRERSA) are compositionally biased toward basic and acidic residues. Phosphoserine is present on residues S334, S336, S373, and S376. Residues 407 to 425 (RSSSVDSFRSRCSSASSCS) are compositionally biased toward low complexity. A phosphoserine mark is found at S447 and S473.

This sequence belongs to the CCDC61 family. Forms homodimers (via head domain). Interacts with CEP170. Interacts with PCM1 and CEP131. Binds tubulin.

The protein localises to the cytoplasm. Its subcellular location is the cytoskeleton. It is found in the microtubule organizing center. The protein resides in the centrosome. It localises to the centriolar satellite. The protein localises to the cilium basal body. Microtubule-binding centrosomal protein required for centriole cohesion, independently of the centrosome-associated protein/CEP250 and rootletin/CROCC linker. In interphase, required for anchoring microtubule at the mother centriole subdistal appendages and for centrosome positioning. During mitosis, may be involved in spindle assembly and chromatin alignment by regulating the organization of spindle microtubules into a symmetrical structure. Has been proposed to play a role in CEP170 recruitment to centrosomes. However, this function could not be confirmed. Plays a non-essential role in ciliogenesis. The polypeptide is Centrosomal protein CCDC61 (Homo sapiens (Human)).